Reading from the N-terminus, the 278-residue chain is Orotidine 5'-phosphate decarboxylase (278 aa).

Residues aspartate 40, 65–67 (KTH), 96–105 (DRKFIDIGNT), tyrosine 230, and arginine 248 each bind substrate. The Proton donor role is filled by lysine 98.

The protein belongs to the OMP decarboxylase family.

It catalyses the reaction orotidine 5'-phosphate + H(+) = UMP + CO2. Its pathway is pyrimidine metabolism; UMP biosynthesis via de novo pathway; UMP from orotate: step 2/2. The chain is Orotidine 5'-phosphate decarboxylase (pyrG) from Penicillium chrysogenum (Penicillium notatum).